Consider the following 149-residue polypeptide: Calmodulin (149 aa).

The residue at position 2 (Thr-2) is an N-acetylthreonine. 4 consecutive EF-hand domains span residues 8 to 43 (EQIA…LGQN), 44 to 79 (PTEA…KMKE), 81 to 116 (DSEE…LGEK), and 117 to 149 (LTDE…MTSK). Residues Asp-21, Asp-23, Asp-25, Thr-27, Glu-32, Asp-57, Asp-59, Asn-61, Thr-63, Glu-68, Asp-94, Asp-96, Asn-98, and Glu-105 each coordinate Ca(2+). At Lys-116 the chain carries N6,N6,N6-trimethyllysine. Positions 130, 132, 134, 136, and 141 each coordinate Ca(2+).

Belongs to the calmodulin family.

In terms of biological role, calmodulin mediates the control of a large number of enzymes, ion channels and other proteins by Ca(2+). Among the enzymes to be stimulated by the calmodulin-Ca(2+) complex are a number of protein kinases and phosphatases. This is Calmodulin from Halichondria okadai (Marine sponge).